The sequence spans 289 residues: MKLIILEHYSQASEWAAKYIRNRIIQFNPGPEKYFTLGLPTGSTPLGCYKKLIEYYKNGDLSFKYVKTFNMDEYVGLPRDHPESYHSFMWNNFFKHIDIHPENTHILDGNAVDLQAECDAFEEKIKAAGGIELFVGGIGPDGHIAFNEPGSSLVSRTRVKTLAMDTILANARFFDGELTKVPTMALTVGVGTVMDAREVMILITGAHKAFALYKAIEEGVNHMWTVSAFQQHPRTVFVCDEDATLELKVKTVKYFKGLMLVHNKLVDPLYSIKEKETEKSQSSKKPYSD.

At lysine 64 the chain carries N6-acetyllysine. Aspartate 72 acts as the Proton acceptor; for enolization step in catalysis. The For ring-opening step role is filled by aspartate 141. Histidine 143 serves as the catalytic Proton acceptor; for ring-opening step. Catalysis depends on glutamate 148, which acts as the For ring-opening step. Threonine 161 is modified (phosphothreonine).

It belongs to the glucosamine/galactosamine-6-phosphate isomerase family. In terms of assembly, homohexamer.

It localises to the cytoplasm. The enzyme catalyses alpha-D-glucosamine 6-phosphate + H2O = beta-D-fructose 6-phosphate + NH4(+). It functions in the pathway nucleotide-sugar biosynthesis; UDP-N-acetyl-alpha-D-glucosamine biosynthesis; alpha-D-glucosamine 6-phosphate from D-fructose 6-phosphate: step 1/1. With respect to regulation, allosterically activated by N-acetylglucosamine-6-phosphate (GlcNAc6P). Catalyzes the reversible conversion of alpha-D-glucosamine 6-phosphate (GlcN-6P) into beta-D-fructose 6-phosphate (Fru-6P) and ammonium ion, a regulatory reaction step in de novo uridine diphosphate-N-acetyl-alpha-D-glucosamine (UDP-GlcNAc) biosynthesis via hexosamine pathway. Deamination is coupled to aldo-keto isomerization mediating the metabolic flux from UDP-GlcNAc toward Fru-6P. At high ammonium level can drive amination and isomerization of Fru-6P toward hexosamines and UDP-GlcNAc synthesis. Has a role in fine tuning the metabolic fluctuations of cytosolic UDP-GlcNAc and their effects on hyaluronan synthesis that occur during tissue remodeling. Seems to trigger calcium oscillations in mammalian eggs. These oscillations serve as the essential trigger for egg activation and early development of the embryo. This chain is Glucosamine-6-phosphate deaminase 1, found in Homo sapiens (Human).